The primary structure comprises 232 residues: LexA repressor (232 aa).

Residues 1-10 show a composition bias toward polar residues; the sequence is MDDSNDSSSA. A disordered region spans residues 1–22; the sequence is MDDSNDSSSAGPDGRLHAVDPS. Positions 47–67 form a DNA-binding region, H-T-H motif; it reads IREIGDAVGLTSTSSVAHQLR. Catalysis depends on for autocatalytic cleavage activity residues Ser-156 and Lys-193.

It belongs to the peptidase S24 family. In terms of assembly, homodimer.

The enzyme catalyses Hydrolysis of Ala-|-Gly bond in repressor LexA.. Represses a number of genes involved in the response to DNA damage (SOS response), including recA and lexA. In the presence of single-stranded DNA, RecA interacts with LexA causing an autocatalytic cleavage which disrupts the DNA-binding part of LexA, leading to derepression of the SOS regulon and eventually DNA repair. This is LexA repressor from Mycolicibacterium paratuberculosis (strain ATCC BAA-968 / K-10) (Mycobacterium paratuberculosis).